The chain runs to 149 residues: Protein NrdI (149 aa).

It belongs to the NrdI family.

Functionally, probably involved in ribonucleotide reductase function. The polypeptide is Protein NrdI (Malacoplasma penetrans (strain HF-2) (Mycoplasma penetrans)).